A 194-amino-acid polypeptide reads, in one-letter code: MLQPNMPAPNFSGQAVVGKEFETISLSDYKGKWVILAFYPLDFTFVCPTEIIAISDQMEQFAQRNCAVIFCSTDSVYSHLQWTKMDRKVGGIGQLNFPLLADKNMSVSRAFGVLDEEQGNTYRGNFLIDPKGVLRQITVNDDPVGRSVEEALRLLDAFIFHEEHGEVCPANWKPKSKTIVPTPDGSKAYFSSAN.

The Thioredoxin domain maps to 2–160 (LQPNMPAPNF…ALRLLDAFIF (159 aa)). Cys-47 serves as the catalytic Cysteine sulfenic acid (-SOH) intermediate.

The protein belongs to the peroxiredoxin family. AhpC/Prx1 subfamily. In terms of assembly, homodimer; disulfide-linked, upon oxidation.

It catalyses the reaction a hydroperoxide + [thioredoxin]-dithiol = an alcohol + [thioredoxin]-disulfide + H2O. In terms of biological role, antioxidant. Could be involved in protection against reactive oxygen species (ROS) generated by metabolic processes and/or protection of the parasite against ROS released by immune effector cells. Functionally, thiol-specific peroxidase that catalyzes the reduction of hydrogen peroxide and organic hydroperoxides to water and alcohols, respectively. Plays a role in cell protection against oxidative stress by detoxifying peroxides and as sensor of hydrogen peroxide-mediated signaling events. This Fasciola hepatica (Liver fluke) protein is Thioredoxin peroxidase.